A 185-amino-acid chain; its full sequence is Large ribosomal subunit protein uL5 (185 aa).

Belongs to the universal ribosomal protein uL5 family. As to quaternary structure, part of the 50S ribosomal subunit; part of the 5S rRNA/L5/L18/L25 subcomplex. Contacts the 5S rRNA and the P site tRNA. Forms a bridge to the 30S subunit in the 70S ribosome.

Its function is as follows. This is one of the proteins that bind and probably mediate the attachment of the 5S RNA into the large ribosomal subunit, where it forms part of the central protuberance. In the 70S ribosome it contacts protein S13 of the 30S subunit (bridge B1b), connecting the 2 subunits; this bridge is implicated in subunit movement. Contacts the P site tRNA; the 5S rRNA and some of its associated proteins might help stabilize positioning of ribosome-bound tRNAs. This is Large ribosomal subunit protein uL5 from Rhodopseudomonas palustris (strain HaA2).